Reading from the N-terminus, the 45-residue chain is Osteocalcin 1 (45 aa).

In terms of domain architecture, Gla spans 1–41; sequence AAGQLSLTQLESLREVCELNLACEHMMDTEGIIAAYTAYYG. The Ca(2+) site is built by E11, E15, E18, and E24. E11, E15, and E18 each carry 4-carboxyglutamate. A disulfide bridge links C17 with C23.

The protein belongs to the osteocalcin/matrix Gla protein family. Post-translationally, gamma-carboxyglutamate residues are formed by vitamin K dependent carboxylation by GGCX. These residues are essential for the binding of calcium.

The protein resides in the secreted. Its function is as follows. The carboxylated form is one of the main organic components of the bone matrix, which constitutes 1-2% of the total bone protein. The carboxylated form binds strongly to apatite and calcium. This chain is Osteocalcin 1, found in Diplodus sargus (White seabream).